Here is a 23-residue protein sequence, read N- to C-terminus: Conolysin-Mt1 (23 aa).

Residue Ser-22 is modified to Serine amide.

In terms of tissue distribution, expressed by the venom duct.

Its subcellular location is the secreted. In terms of biological role, this cytolytic peptide has ability to disrupt the integrity of cell membranes from both prokaryotes and eukaryotes. It permeabilizes both negatively charged prokaryotic (PE:PG) and zwitterionic eukaryotic (PC:cholesterol) model membranes. It has potent hemolytic activity on human erythrocytes and exhibits low antimicrobial activity against the Gram-negative bacterium E.coli (MIC&gt;50 uM) and the Gram-positive bacterium S.aureus (MIC=25-50 uM). Intracranial injection causes mice to shuffle backward until the encounter an obstacle, at which time the mouse jump into the air. The backward shuffle is reminiscent to the signature dance 'moonwalk' that gained widespread popularity after being performed by Michael Jackson. This Conus mustelinus (Weasel cone) protein is Conolysin-Mt1.